A 386-amino-acid polypeptide reads, in one-letter code: Succinate--CoA ligase [ADP-forming] subunit beta (386 aa).

The ATP-grasp domain occupies 9–244 (KEILRKYGVP…HDEEDPLETR (236 aa)). ATP is bound by residues Lys46, 53–55 (GRG), Glu99, Cys102, and Glu107. Residues Asn199 and Asp213 each coordinate Mg(2+). Substrate is bound by residues Asn264 and 321–323 (GIM).

Belongs to the succinate/malate CoA ligase beta subunit family. As to quaternary structure, heterotetramer of two alpha and two beta subunits. Mg(2+) is required as a cofactor.

It carries out the reaction succinate + ATP + CoA = succinyl-CoA + ADP + phosphate. It catalyses the reaction GTP + succinate + CoA = succinyl-CoA + GDP + phosphate. The protein operates within carbohydrate metabolism; tricarboxylic acid cycle; succinate from succinyl-CoA (ligase route): step 1/1. Functionally, succinyl-CoA synthetase functions in the citric acid cycle (TCA), coupling the hydrolysis of succinyl-CoA to the synthesis of either ATP or GTP and thus represents the only step of substrate-level phosphorylation in the TCA. The beta subunit provides nucleotide specificity of the enzyme and binds the substrate succinate, while the binding sites for coenzyme A and phosphate are found in the alpha subunit. The sequence is that of Succinate--CoA ligase [ADP-forming] subunit beta from Rickettsia felis (strain ATCC VR-1525 / URRWXCal2) (Rickettsia azadi).